The following is a 685-amino-acid chain: MLPYNQDFYNEDEALKDDHCEGAGNVSNPPTLDEAIKRSQDFLLSQQYPEGYWWAELEGNPTITSHTVILYKILGIEDEYPMDKMEKYLRRMQCIHGGWELFYGDGGQLSVTIESYVALRLLNVPPTDPALKKALKFIIDKGGVXKSRMFTKICLALLGCFDWRGIPSLPPWVMLLPGWFLSSIYETACWARGCVVPLIVVFDKKPVFKVSPEVSFDELYAEGREHACKTLPFCGDWTSHFFIAVDRVFKMMERLGVVPFQQWGIREAEKWLLERQEDTGDFLGVYPPMFYSVVCMKTLGYEVTDPVVRRALLSFKKFSIERADECSVQSSLSPVWDTALVVRSLVESGLPPDHPALQRAGEWLLQKQITKHGDWSFKNQSGVAGGWAFQFFNRWYPDLDDSAVVVMALDCLKLPNEDVKNGAITRCLKWISSMQCKGGGWAAFDKDNHQHWINSTPFSDLKAMVDPSTTDISARVLEMVGRLKLHGTSFDEAHFLPPESIARGLVYLRREQENEGCWFGRWGVNYIYGTCGALVALSLVAPMTHEEEIARGARWLVQVQNMHGKKINGPQDGGWGETCFSYNDPALKGQGDVSTASQTAWALQGLLAAGDALGKYEVESIGHGVQYLLSTQRKDGSWHESQFTGGGFPIHFYLRYHFYAQHFTLSSLARYRTRLQASKIKPPIP.

PFTB repeat units follow at residues 82–123 and 265–308; these read MDKM…RLLN and IREA…DPVV. Aspartate 400 (proton donor) is an active-site residue. PFTB repeat units lie at residues 424-465 and 621-672; these read ITRC…KAMV and IGHG…ARYR.

The protein belongs to the terpene cyclase/mutase family.

It catalyses the reaction squalene = dammara-20,24-diene. Functionally, squalene cyclase producing the tetracyclic triterpene dammaradiene. This Dryopteris crassirhizoma (Thick stemmed wood fern) protein is Dammaradiene synthase (DCD).